Reading from the N-terminus, the 976-residue chain is 3-hydroxy-3-methylglutaryl-coenzyme A reductase (976 aa).

Over 1–36 the chain is Lumenal; sequence MDHEGCQGQHPQQCCQWVSNAWSEFLDLLKNAETLD. Positions 36-217 constitute an SSD domain; that stretch reads DIVIMLLGYI…FTFYTAILSI (182 aa). Residues 37-57 form a helical membrane-spanning segment; it reads IVIMLLGYIAMHLTFVSLFLS. Over 58-64 the chain is Cytoplasmic; sequence MRKMGSK. Residues 65–85 traverse the membrane as a helical segment; the sequence is FWLGICTLFSSVFAFLFGLVV. Over 86–90 the chain is Lumenal; that stretch reads TTKLG. Residues 91-111 traverse the membrane as a helical segment; that stretch reads VPISVILLSEGLPFLVVTIGF. Over 112 to 169 the chain is Cytoplasmic; that stretch reads EKNIVLTRAVMSHAIEHRRIQAQNSKSGKRSPDGSTQNMIQYAVQAAIKEKGFEIIRD. The helical transmembrane segment at 170-190 threads the bilayer; it reads YAIEIVILVIGAASGVQGGLQ. At 191-193 the chain is on the lumenal side; that stretch reads QFC. A helical transmembrane segment spans residues 194–214; the sequence is FLAAWTLFFDFILLFTFYTAI. Topologically, residues 215-272 are cytoplasmic; sequence LSIKLRSTVSSVMSICVWPLRMMASRRVAENVAKGDDELNRVRGDAPLFGRKSSSIPK. A helical membrane pass occupies residues 273–293; sequence FKVLMILGFIFVNIVNICSIP. Residues 294–401 are Lumenal-facing; the sequence is FRNPSSMSTI…GGILKSLEDP (108 aa). A helical transmembrane segment spans residues 402–422; sequence VLSKWIVIALALSVALNGYLF. At 423–976 the chain is on the cytoplasmic side; the sequence is NVARWGIKDP…RYSEVKAIDE (554 aa). The active-site Charge relay system is the glutamate 618. CoA is bound at residue 624-630; the sequence is SASRGCK. NADP(+) contacts are provided by residues 685–687 and 712–720; these read SRF and DAMGMNMIS. Lysine 752 (charge relay system) is an active-site residue. 781-783 is a binding site for CoA; that stretch reads VLK. Aspartate 828 serves as the catalytic Charge relay system. 923–924 lines the CoA pocket; it reads AH. Histidine 924 acts as the Proton donor in catalysis. The disordered stretch occupies residues 926-954; sequence QHNRSAAPSRSTTPGSSHDARLTGHDQCP. 928–929 serves as a coordination point for NADP(+); that stretch reads NR. A compositionally biased stretch (polar residues) spans 928 to 941; the sequence is NRSAAPSRSTTPGS. Residues 943 to 953 are compositionally biased toward basic and acidic residues; sequence HDARLTGHDQC.

It belongs to the HMG-CoA reductase family.

It is found in the endoplasmic reticulum membrane. The enzyme catalyses (R)-mevalonate + 2 NADP(+) + CoA = (3S)-3-hydroxy-3-methylglutaryl-CoA + 2 NADPH + 2 H(+). It participates in metabolic intermediate biosynthesis; (R)-mevalonate biosynthesis; (R)-mevalonate from acetyl-CoA: step 3/3. In terms of biological role, HMG-CoA reductase; part of the first module of ergosterol biosynthesis pathway that includes the early steps of the pathway, conserved across all eukaryotes, and which results in the formation of mevalonate from acetyl-coenzyme A (acetyl-CoA). In this module, the cytosolic acetyl-CoA acetyltransferase catalyzes the formation of acetoacetyl-CoA. The hydroxymethylglutaryl-CoA synthase then condenses acetyl-CoA with acetoacetyl-CoA to form HMG-CoA. The rate-limiting step of the early module is the reduction to mevalonate by the 3-hydroxy-3-methylglutaryl-coenzyme A (HMG-CoA) reductase HMGR. In Fusarium fujikuroi (Bakanae and foot rot disease fungus), this protein is 3-hydroxy-3-methylglutaryl-coenzyme A reductase.